Here is a 132-residue protein sequence, read N- to C-terminus: Small ribosomal subunit protein uS8c (132 aa).

Belongs to the universal ribosomal protein uS8 family. Part of the 30S ribosomal subunit.

The protein localises to the plastid. The protein resides in the chloroplast. Its function is as follows. One of the primary rRNA binding proteins, it binds directly to 16S rRNA central domain where it helps coordinate assembly of the platform of the 30S subunit. This is Small ribosomal subunit protein uS8c (rps8) from Thalassiosira pseudonana (Marine diatom).